Consider the following 79-residue polypeptide: UPF0654 protein C11D3.01c (79 aa).

The interval 1-79 (MPNPGNVIGG…RAQEELENLE (79 aa)) is disordered. Residues 22 to 45 (EETKQREKEYLEEHEGEVGEEHQK) show a composition bias toward basic and acidic residues.

The protein belongs to the UPF0654 (con-6) family.

The polypeptide is UPF0654 protein C11D3.01c (Schizosaccharomyces pombe (strain 972 / ATCC 24843) (Fission yeast)).